The sequence spans 337 residues: Protein SphX (337 aa).

Positions methionine 1–alanine 30 are cleaved as a signal peptide.

This sequence belongs to the PstS family. Post-translationally, the N-terminus is blocked.

The protein resides in the cell inner membrane. In terms of biological role, may be involved in the system for phosphate transport across the cytoplasmic membrane. The chain is Protein SphX (sphX) from Synechococcus elongatus (strain ATCC 33912 / PCC 7942 / FACHB-805) (Anacystis nidulans R2).